A 206-amino-acid chain; its full sequence is Small ribosomal subunit protein uS4 (206 aa).

In terms of domain architecture, S4 RNA-binding spans 93 to 153 (TRLDALVLRA…PKSQTMVPFQ (61 aa)).

This sequence belongs to the universal ribosomal protein uS4 family. Part of the 30S ribosomal subunit. Contacts protein S5. The interaction surface between S4 and S5 is involved in control of translational fidelity.

Functionally, one of the primary rRNA binding proteins, it binds directly to 16S rRNA where it nucleates assembly of the body of the 30S subunit. With S5 and S12 plays an important role in translational accuracy. This chain is Small ribosomal subunit protein uS4, found in Bifidobacterium animalis subsp. lactis (strain AD011).